Reading from the N-terminus, the 75-residue chain is uncharacterized protein (75 aa).

The protein belongs to the HSBP1 family.

This is an uncharacterized protein from Schizosaccharomyces pombe (strain 972 / ATCC 24843) (Fission yeast).